The chain runs to 353 residues: Phosphoribosylformylglycinamidine cyclo-ligase (353 aa).

Belongs to the AIR synthase family.

Its subcellular location is the cytoplasm. It carries out the reaction 2-formamido-N(1)-(5-O-phospho-beta-D-ribosyl)acetamidine + ATP = 5-amino-1-(5-phospho-beta-D-ribosyl)imidazole + ADP + phosphate + H(+). Its pathway is purine metabolism; IMP biosynthesis via de novo pathway; 5-amino-1-(5-phospho-D-ribosyl)imidazole from N(2)-formyl-N(1)-(5-phospho-D-ribosyl)glycinamide: step 2/2. The sequence is that of Phosphoribosylformylglycinamidine cyclo-ligase from Pseudomonas aeruginosa (strain ATCC 15692 / DSM 22644 / CIP 104116 / JCM 14847 / LMG 12228 / 1C / PRS 101 / PAO1).